Consider the following 507-residue polypeptide: Transmembrane protein 184 homolog DDB_G0276041 (507 aa).

Transmembrane regions (helical) follow at residues 13-33 (IVML…AVIL), 50-70 (IVRI…SLFF), 88-108 (AYVL…EEAL), 141-161 (LGLV…AAIL), 179-199 (LWIT…LVMF), 222-242 (VVFF…FDAL), and 260-280 (FLVC…FSYS). 6 N-linked (GlcNAc...) asparagine glycosylation sites follow: Asn360, Asn375, Asn470, Asn473, Asn477, and Asn498. Positions 448–500 (NGASNNNNNNNNNNNNINNNNNNNSNNSNNNSNSQFESIDINSNSVNSNKNQS) are disordered. Positions 451–500 (SNNNNNNNNNNNNINNNNNNNSNNSNNNSNSQFESIDINSNSVNSNKNQS) are enriched in low complexity.

It belongs to the TMEM184 family.

The protein localises to the cell membrane. Probable transporter. This chain is Transmembrane protein 184 homolog DDB_G0276041 (tmem184B), found in Dictyostelium discoideum (Social amoeba).